We begin with the raw amino-acid sequence, 588 residues long: Disabled homolog 1 (588 aa).

The tract at residues 1 to 26 (MSTETELQVAVKTSAKKDSRKKGQDR) is disordered. Basic and acidic residues predominate over residues 15-26 (AKKDSRKKGQDR). Residues 36-189 (KGEGVRYKAK…CEQAVYQTIL (154 aa)) form the PID domain. Y198, Y220, and Y232 each carry phosphotyrosine. Disordered regions lie at residues 417–443 (LTPL…RQKM), 451–470 (FQMA…PSLT), and 502–588 (LTPV…QAGS). Residues 424 to 436 (PGTSDSTRSSPQT) show a composition bias toward polar residues. 2 stretches are compositionally biased toward low complexity: residues 503 to 512 (TPVTSTTPST) and 520 to 534 (PRQS…SHAS). S524 carries the phosphoserine; by CDK5 modification. Over residues 537–546 (TTDDIFEEGF) the composition is skewed to acidic residues.

As to quaternary structure, associates with the SH2 domains of SRC, FYN and ABL. Interacts (phosphorylated on tyrosine residues) with CRK and CRKL (via respective SH2 domain). Interacts with SIAH1, LRP8 and VLDLR. Interacts with LRP1. Interacts with APLP1 (via NPXY motif). Interacts with DAB2IP. Interacts with ZSWIM8. Post-translationally, phosphorylated by FYN on Tyr-198 and Tyr-220 upon reelin induction in embryonic neurons. Also phosphorylated on Ser-524 independently of reelin signaling. In terms of processing, ubiquitinated by various cullin-5-RING E3 ubiquitin-protein ligase complexes (ECS complexes) following ligand-binding and phosphorylation, leading to its degradation. Ubiquitinated by the ECS(SOCS7) complex in the cortical plate of the developing cerebral cortex following ligand-binding and phosphorylation by FYN, leading to its degradation by the proteasome. Recognized by ZSWIM8 through a disorder targets misorder mechanism that eliminates misfolded DAB1 via ubiquitination and proteasomal degradation. In terms of tissue distribution, mainly expressed in brain.

It localises to the cytoplasm. Signaling adapter of the reelin-mediated signaling pathway, which regulates the migration and differentiation of postmitotic neurons during brain development. Mediates intracellular transduction of Reelin signaling following reelin (RELN)-binding to its receptor: acts by docking proteins through its phosphotyrosine residues and PID domain. This chain is Disabled homolog 1 (DAB1), found in Homo sapiens (Human).